The chain runs to 599 residues: NTPase KAP family P-loop domain-containing protein 1 (599 aa).

Positions 1–416 (MQQEAAQRES…NTVPITVRLL (416 aa)) constitute a KAP NTPase domain. Helical transmembrane passes span 25-45 (GWGV…ITEL), 119-139 (VCLA…LLYL), and 156-176 (ALGG…VYSV). The tract at residues 543 to 599 (ALKPPSPPKSPSQDGPQASPRAIIAAGTSHAGQGSGHSKEAHQTRDRTHGGKPRPMA) is disordered. Residues 579 to 591 (HSKEAHQTRDRTH) are compositionally biased toward basic and acidic residues.

It localises to the membrane. This chain is NTPase KAP family P-loop domain-containing protein 1 (Nkpd1), found in Mus musculus (Mouse).